The chain runs to 2049 residues: MATVPVSVHDLIRHHAEAHPEALAISKNEDQITYGELYAASTRIAQLLADQGVEKGDVVPLLGSRCLEMIACTLAIFMIGATLVPMEAGSWSEARIQTVLDALEYKTLLVTADGDVRRRKTIDYHEIQRAMTGGNGWDCGNAKVPINGPESVRDVAYIIFTSGTTGNPKGVKVTHQSLLNYVWPAHANAPFNLGVGPSDTSLLLFSVAFDAFYGVLLSTLCNGGHVLLSEPSTFIDDAKKCTLLPATPTLLGTISDVSPYSNVRGIFLGGETPTPDVVRKWWTPSRSMWNAYGPTETTVSVTMAELRPDVPIVLGEPIRNSKIIILDSNLEEATQGEICVLGSTVLALGYYKNQAQTDDKFVLWNNERIYRTGDMAKWTENGLKFLGRKDQLIKNRGFLINLEADVIPAILSQNNVETATVLMHRQRLIAFVTPLTVNGDLVRQEMARRFDQFLVPDEIQSRDQLPQTINGKVDNRALYDELVQRDTVGVASNAPIATADTKLSALMNTMSEALTIPAQMIRPELSFTDVGGNSLLAIKMLSALRQKGLSLSMSSLFLLPTISEISNHIIEFDASVSHDDDDQQAADLAGCGKSLSLPGATRSAREITMTDVQRGMIRSTLHDAPTGYMLITISLHQNARDIHPSRLSNAVSQVLGRHDIFCSSFDLVRGTISVNDRYQHDWETRALDGSPMSQAIADESELLNQRARMSDTSNEFFRPVNAFRLLLGENSESVLLWLVHHALVDGWSVGKLLNDFRAQLLTEHSQAAQQSQFSQYTAALTPHLEKVHEPAELFWRESMAGLLDGTELKVGRLEDGASNGSRIEHECLSLGLSLEQTEIAARALGFSPAVIFHAAWALLLSSYASEDAVVFGSVFSARSFHVPRIEEIVGPLINLCPFPVQVHALGSKMDLLSSVQSLLLQISEYQWSASKILQDIASGSHARIFSTALFLEYDLPLYASSDQHELAAWTYDRKDWPEFGLTLQVQCVGEHLGFRAVIKDPKYESPLASRLLGHFRNLCLFLLSPKISTLAEANDSMLEPTEMLCLTRTSTSLFTPYSGPPTLKQAFEIGVAAWPMSVALESLSGKLLYQELDDITNALACSIRGLIRPRDVVALLSDGSQNWLLGVISIIKAGATYLPLDTKLPAQRMEAMMETSGACLCVYPNASSLAAFSDLSKPRYLVYEHAAVKTMNGSSSDRLEDIVGPDDYAYIMFTSGSTGTPKGIRVTHRATTSHLSFEPARLHARPGRRHAQVFSPGFDVNIAEIFGTLCYGATLVLKDPADPFAHLSRVDAAMITPSFLSVLSPTELQNLDSIYLIGEAVSQSLADRWSPGRVLYNFYGPCECTIAVAYTRLEIGRPVTLGKTIPRVGCYILDRLLRPVPMGVIGEICLYGVQTMEGYIGQNADEVTKRAFVQDPFRRPGERMYRTGDLAFWTENMEMRYVGRADHQVKVRGYRIELEEIENVIRRSDENVSQSVAIVHQDTIYAFATPQGARIDQIQQCLRQHLPSYAVPQLIIALEAFPTTPNQKLDRKALINLLAPVCSRENETTDHTELVVSQVWREVIGLDEEIALSIDDDFLAIGGNSLRQIAAAQKICSKLGCRVPLSLFITSRSIRSLAASVKKHLAQQSLASTTSVSLAEFSNQCQFLSSKLSYLEKEFLRMHKQASNPSSFNVVHRVRLQGDVDSLLLERALRTVVSKHDILRASYVEVDGVPQRVIQTNTIQIDRIECSDDVAKLHDYISTKFELSGVLIRIALVERCGATDVVLVQHHIITDQVSVQIFLTNLSMEYRALACRDESGQTICTSDHSTNDYHVWALWRDSQLEQPPENTHCEFWRSQFGEKTESIRLVQHQKHPAGEFHSVPRRLKRNSSSGSIEVYLAAAALALQKVSRLNTIRLGVPFLDRLEPGTENMMGVFLDALPVCVQIEPHTDLPSLLSTIRTTLTSALAHAIPSFMIKDIVGLDSIFEVMIVYNRFEDRVTRNMSIPGVSISVEAMRAQGAKFPLLIEFNEHVDHVTLEIEYSEDVLTPSSLSRFEQEICNLLDPQIVV.

The interval 13–395 (RHHAEAHPEA…LGRKDQLIKN (383 aa)) is adenylation 1. The Carrier 1 domain occupies 497 to 573 (ATADTKLSAL…EISNHIIEFD (77 aa)). At Ser-534 the chain carries O-(pantetheine 4'-phosphoryl)serine. The condensation 1 stretch occupies residues 605–913 (REITMTDVQR…ALGSKMDLLS (309 aa)). The tract at residues 1071–1452 (VAAWPMSVAL…GRADHQVKVR (382 aa)) is adenylation 2. Positions 1550–1625 (DHTELVVSQV…SLAASVKKHL (76 aa)) constitute a Carrier 2 domain. An O-(pantetheine 4'-phosphoryl)serine modification is found at Ser-1585. The interval 1662–2044 (MHKQASNPSS…FEQEICNLLD (383 aa)) is condensation 2.

It belongs to the NRP synthetase family.

It functions in the pathway secondary metabolite biosynthesis. In terms of biological role, nonribosomal peptide synthetase; part of the gene cluster that mediates the biosynthesis of an unusual class of epipolythiodioxopiperazines (ETPs) lacking the reactive thiol group important for toxicity. Firstly, L-tyrosine is prenylated by tcpD, before undergoing condensation with L-glycine in a reaction catalyzed by the NRPS tcpP leading to the diketopiperazine (DKP) backbone. Afterwards the alpha-carbon of tyrosine is oxidized by the cytochrome P450 tcpC to form a hydroxyl group. However, in contrast other ETP biosynthesis pathways studied so far, tcpC is not able to bishydroxylate the DKP at both alpha-carbon positions, but hydroxylates the alpha-carbon of the tyrosine part and the nitrogen of the glycine part. The next steps involve an alpha,beta-elimination reaction catalyzed by tcpI, a methylation by the methyltransferase tcpN the action of the four enzyme cascade tcpG/K/J/I. Due to a dysfunctional cytochrome P450 monooxygenase tcpC, the pathway leads to the biosynthesis of probable non-toxic metabolites lacking the reactive thiol group. This is Nonribosomal peptide synthetase tcpP from Claviceps purpurea (strain 20.1) (Ergot fungus).